A 405-amino-acid polypeptide reads, in one-letter code: DNA primase DnaG (405 aa).

Residues 172–248 (DSIIVVEGRA…HIDYIARAPP (77 aa)) enclose the Toprim domain. Mg(2+) contacts are provided by Glu178, Asp222, and Asp224. Residues 279 to 302 (AAGEKTESQMSPQQPQLTQTQPTT) form a disordered region. The segment covering 290–302 (PQQPQLTQTQPTT) has biased composition (low complexity).

This sequence belongs to the archaeal DnaG primase family. As to quaternary structure, forms a ternary complex with MCM helicase and DNA. Component of the archaeal exosome complex. It depends on Mg(2+) as a cofactor.

It catalyses the reaction ssDNA + n NTP = ssDNA/pppN(pN)n-1 hybrid + (n-1) diphosphate.. Functionally, RNA polymerase that catalyzes the synthesis of short RNA molecules used as primers for DNA polymerase during DNA replication. Also part of the exosome, which is a complex involved in RNA degradation. Acts as a poly(A)-binding protein that enhances the interaction between heteromeric, adenine-rich transcripts and the exosome. The sequence is that of DNA primase DnaG from Pyrobaculum islandicum (strain DSM 4184 / JCM 9189 / GEO3).